A 214-amino-acid polypeptide reads, in one-letter code: tRNA (guanine-N(7)-)-methyltransferase (214 aa).

Residues E44, E69, D96, and D118 each coordinate S-adenosyl-L-methionine. D118 is an active-site residue. Residues K122, D154, and 191 to 194 (TEYE) each bind substrate.

The protein belongs to the class I-like SAM-binding methyltransferase superfamily. TrmB family.

The catalysed reaction is guanosine(46) in tRNA + S-adenosyl-L-methionine = N(7)-methylguanosine(46) in tRNA + S-adenosyl-L-homocysteine. It participates in tRNA modification; N(7)-methylguanine-tRNA biosynthesis. In terms of biological role, catalyzes the formation of N(7)-methylguanine at position 46 (m7G46) in tRNA. This is tRNA (guanine-N(7)-)-methyltransferase from Listeria monocytogenes serotype 4b (strain F2365).